A 161-amino-acid polypeptide reads, in one-letter code: Nucleotide-binding protein H16_A3060 (161 aa).

It belongs to the YajQ family.

Functionally, nucleotide-binding protein. The chain is Nucleotide-binding protein H16_A3060 from Cupriavidus necator (strain ATCC 17699 / DSM 428 / KCTC 22496 / NCIMB 10442 / H16 / Stanier 337) (Ralstonia eutropha).